Reading from the N-terminus, the 187-residue chain is Probable nicotinate-nucleotide adenylyltransferase (187 aa).

Belongs to the NadD family.

The enzyme catalyses nicotinate beta-D-ribonucleotide + ATP + H(+) = deamido-NAD(+) + diphosphate. It functions in the pathway cofactor biosynthesis; NAD(+) biosynthesis; deamido-NAD(+) from nicotinate D-ribonucleotide: step 1/1. Functionally, catalyzes the reversible adenylation of nicotinate mononucleotide (NaMN) to nicotinic acid adenine dinucleotide (NaAD). This chain is Probable nicotinate-nucleotide adenylyltransferase, found in Anaeromyxobacter dehalogenans (strain 2CP-C).